A 268-amino-acid polypeptide reads, in one-letter code: uncharacterized protein (268 aa).

Transmembrane regions (helical) follow at residues 32–52, 70–90, 125–145, and 237–257; these read SLLL…IFFI, VFVG…AFLF, GVSS…FYIF, and IKYI…AYLT.

This sequence belongs to the CbiQ family.

It localises to the cell membrane. This is an uncharacterized protein from Methanocaldococcus jannaschii (strain ATCC 43067 / DSM 2661 / JAL-1 / JCM 10045 / NBRC 100440) (Methanococcus jannaschii).